The chain runs to 205 residues: Probable thymidylate kinase (205 aa).

Position 10 to 17 (10 to 17) interacts with ATP; the sequence is GIDGSGKS.

This sequence belongs to the thymidylate kinase family.

It carries out the reaction dTMP + ATP = dTDP + ADP. The sequence is that of Probable thymidylate kinase from Methanosarcina barkeri (strain Fusaro / DSM 804).